The chain runs to 1014 residues: Endogenous retrovirus group K member 10 Pol protein (1014 aa).

One can recognise a Reverse transcriptase domain in the interval 57–245; sequence LEKGHIEPSF…TPFHYLGMQI (189 aa). Positions 161-164 match the LPQG motif; sequence LPQG. The YXDD signature appears at 195-198; the sequence is YIDD. An RNase H type-1 domain is found at 460 to 590; that stretch reads LENALTVFTD…ADLLVSSALI (131 aa). Mg(2+)-binding residues include aspartate 469, glutamate 497, aspartate 517, and aspartate 582. The Integrase-type zinc finger occupies 587–628; it reads SALIKAQELHALTHVNAAGLKNKFDVTWKQAKDIVQHCTQCQ. Residues histidine 596, histidine 600, cysteine 624, and cysteine 627 each coordinate Zn(2+). Residues 642–803 enclose the Integrase catalytic domain; sequence RGLCPNALWQ…TSAEQHLTGK (162 aa). Residues 811–859 constitute a DNA-binding region (integrase-type); sequence KLIWWKDNKNKTWEIGKVITWGRGFACVSPGENQLPVWLPTRHLKFYNE.

The protein belongs to the beta type-B retroviral polymerase family. HERV class-II K(HML-2) pol subfamily.

The catalysed reaction is DNA(n) + a 2'-deoxyribonucleoside 5'-triphosphate = DNA(n+1) + diphosphate. The enzyme catalyses Endonucleolytic cleavage to 5'-phosphomonoester.. In terms of biological role, early post-infection, the reverse transcriptase converts the viral RNA genome into double-stranded viral DNA. The RNase H domain of the reverse transcriptase performs two functions. It degrades the RNA template and specifically removes the RNA primer from the RNA/DNA hybrid. Following nuclear import, the integrase catalyzes the insertion of the linear, double-stranded viral DNA into the host cell chromosome. Endogenous Pol proteins may have kept, lost or modified their original function during evolution. In Homo sapiens (Human), this protein is Endogenous retrovirus group K member 10 Pol protein (ERVK-10).